A 410-amino-acid chain; its full sequence is Multifunctional CCA protein (410 aa).

2 residues coordinate ATP: Gly-8 and Arg-11. The CTP site is built by Gly-8 and Arg-11. Residues Asp-21 and Asp-23 each coordinate Mg(2+). Positions 91, 137, and 140 each coordinate ATP. Residues Arg-91, Arg-137, and Arg-140 each contribute to the CTP site. One can recognise an HD domain in the interval 225–326 (SGIHTLMTLQ…LNVLKKTDAF (102 aa)).

It belongs to the tRNA nucleotidyltransferase/poly(A) polymerase family. Bacterial CCA-adding enzyme type 1 subfamily. In terms of assembly, monomer. Can also form homodimers and oligomers. Mg(2+) serves as cofactor. The cofactor is Ni(2+).

The enzyme catalyses a tRNA precursor + 2 CTP + ATP = a tRNA with a 3' CCA end + 3 diphosphate. The catalysed reaction is a tRNA with a 3' CCA end + 2 CTP + ATP = a tRNA with a 3' CCACCA end + 3 diphosphate. Functionally, catalyzes the addition and repair of the essential 3'-terminal CCA sequence in tRNAs without using a nucleic acid template. Adds these three nucleotides in the order of C, C, and A to the tRNA nucleotide-73, using CTP and ATP as substrates and producing inorganic pyrophosphate. tRNA 3'-terminal CCA addition is required both for tRNA processing and repair. Also involved in tRNA surveillance by mediating tandem CCA addition to generate a CCACCA at the 3' terminus of unstable tRNAs. While stable tRNAs receive only 3'-terminal CCA, unstable tRNAs are marked with CCACCA and rapidly degraded. The chain is Multifunctional CCA protein from Neisseria gonorrhoeae (strain ATCC 700825 / FA 1090).